Here is a 510-residue protein sequence, read N- to C-terminus: 2,3-bisphosphoglycerate-independent phosphoglycerate mutase (510 aa).

Positions 14 and 64 each coordinate Mn(2+). S64 acts as the Phosphoserine intermediate in catalysis. Residues H125, 155-156, R187, R193, 259-262, and K332 each bind substrate; these read RD and RADR. D399, H403, D440, H441, and H459 together coordinate Mn(2+).

Belongs to the BPG-independent phosphoglycerate mutase family. Monomer. Requires Mn(2+) as cofactor.

It catalyses the reaction (2R)-2-phosphoglycerate = (2R)-3-phosphoglycerate. It participates in carbohydrate degradation; glycolysis; pyruvate from D-glyceraldehyde 3-phosphate: step 3/5. In terms of biological role, catalyzes the interconversion of 2-phosphoglycerate and 3-phosphoglycerate. Essential for the growth and pathogenicity on the host plant. The polypeptide is 2,3-bisphosphoglycerate-independent phosphoglycerate mutase (Pseudomonas syringae pv. tomato (strain ATCC BAA-871 / DC3000)).